The primary structure comprises 371 residues: 4-hydroxybenzoate polyprenyltransferase, mitochondrial (371 aa).

The N-terminal 34 residues, methionine 1–alanine 34, are a transit peptide targeting the mitochondrion. Residues alanine 35–proline 83 are Mitochondrial matrix-facing. A helical membrane pass occupies residues isoleucine 84–glycine 104. The Mitochondrial intermembrane segment spans residues cysteine 105–aspartate 108. Residues tryptophan 109 to isoleucine 129 traverse the membrane as a helical segment. The Mitochondrial matrix segment spans residues asparagine 130 to proline 148. Residues isoleucine 149–leucine 169 form a helical membrane-spanning segment. Over alanine 170–glycine 172 the chain is Mitochondrial intermembrane. A helical transmembrane segment spans residues valine 173–isoleucine 193. Residues threonine 194–tyrosine 203 are Mitochondrial matrix-facing. The chain crosses the membrane as a helical span at residues tryptophan 204 to isoleucine 224. Topologically, residues lysine 225–serine 231 are mitochondrial intermembrane. The helical transmembrane segment at valine 232–alanine 252 threads the bilayer. The Mitochondrial matrix segment spans residues histidine 253–proline 277. A helical membrane pass occupies residues tryptophan 278–glycine 298. Residues glutamine 299–threonine 300 are Mitochondrial intermembrane-facing. The chain crosses the membrane as a helical span at residues alanine 301–leucine 321. Over aspartate 322–lysine 332 the chain is Mitochondrial matrix. Residues phenylalanine 333 to tryptophan 353 traverse the membrane as a helical segment. At lysine 354–asparagine 371 the chain is on the mitochondrial intermembrane side.

It belongs to the UbiA prenyltransferase family. Mg(2+) serves as cofactor. In terms of tissue distribution, widely expressed. Present in all of the tissues tested. Expressed at higher level in skeletal muscle, adrenal glands and the heart.

The protein resides in the mitochondrion inner membrane. The catalysed reaction is an all-trans-polyprenyl diphosphate + 4-hydroxybenzoate = a 4-hydroxy-3-(all-trans-polyprenyl)benzoate + diphosphate. The enzyme catalyses all-trans-decaprenyl diphosphate + 4-hydroxybenzoate = 4-hydroxy-3-(all-trans-decaprenyl)benzoate + diphosphate. It carries out the reaction all-trans-nonaprenyl diphosphate + 4-hydroxybenzoate = 4-hydroxy-3-(all-trans-nonaprenyl)benzoate + diphosphate. It participates in cofactor biosynthesis; ubiquinone biosynthesis. Its function is as follows. Mediates the second step in the final reaction sequence of coenzyme Q (CoQ) biosynthesis. Catalyzes the prenylation of para-hydroxybenzoate (PHB) with an all-trans polyprenyl donor (such as all-trans-decaprenyl diphosphate). The length of the polyprenyl side chain varies depending on the species, in humans, the side chain is comprised of 10 isoprenyls (decaprenyl) producing CoQ10 (also known as ubiquinone), whereas rodents predominantly generate CoQ9. However, this specificity is not complete, human tissues have low amounts of CoQ9 and rodent organs contain some CoQ10. Plays a central role in the biosynthesis of CoQ10. CoQ10 is a vital molecule that transports electrons from mitochondrial respiratory chain complexes. CoQs also function as cofactors for uncoupling protein and play a role as regulators of the extracellularly-induced ceramide-dependent apoptotic pathway. Regulates mitochondrial permeability transition pore (mPTP) opening and ROS production (pivotal events in cell death) in a tissue specific manner. The protein is 4-hydroxybenzoate polyprenyltransferase, mitochondrial of Homo sapiens (Human).